A 361-amino-acid polypeptide reads, in one-letter code: Chorismate synthase (361 aa).

Residues arginine 48 and arginine 54 each coordinate NADP(+). Residues 125–127 (RSS), 238–239 (NA), glycine 278, 293–297 (KPTSS), and arginine 319 each bind FMN.

It belongs to the chorismate synthase family. Homotetramer. Requires FMNH2 as cofactor.

It carries out the reaction 5-O-(1-carboxyvinyl)-3-phosphoshikimate = chorismate + phosphate. It functions in the pathway metabolic intermediate biosynthesis; chorismate biosynthesis; chorismate from D-erythrose 4-phosphate and phosphoenolpyruvate: step 7/7. In terms of biological role, catalyzes the anti-1,4-elimination of the C-3 phosphate and the C-6 proR hydrogen from 5-enolpyruvylshikimate-3-phosphate (EPSP) to yield chorismate, which is the branch point compound that serves as the starting substrate for the three terminal pathways of aromatic amino acid biosynthesis. This reaction introduces a second double bond into the aromatic ring system. The chain is Chorismate synthase from Escherichia coli O157:H7.